A 418-amino-acid polypeptide reads, in one-letter code: Methylmalonic aciduria type A protein, mitochondrial (418 aa).

The transit peptide at 1–65 directs the protein to the mitochondrion; sequence MPMLLPHPHQ…LLSDGLKRKL (65 aa). GTP-binding positions include 150-158, D292, and 328-330; these read GPPGAGKST and SAR.

The protein belongs to the SIMIBI class G3E GTPase family. ArgK/MeaB subfamily. In terms of assembly, homodimer. Interacts with MMUT (the apoenzyme form); the interaction is GTP dependent. In terms of tissue distribution, widely expressed. Highest expression is observed in liver and skeletal muscle.

It is found in the mitochondrion. The protein resides in the cytoplasm. It carries out the reaction GTP + H2O = GDP + phosphate + H(+). With respect to regulation, GTPase activity is stimulated by MMUT. In terms of biological role, GTPase, binds and hydrolyzes GTP. Involved in intracellular vitamin B12 metabolism, mediates the transport of cobalamin (Cbl) into mitochondria for the final steps of adenosylcobalamin (AdoCbl) synthesis. Functions as a G-protein chaperone that assists AdoCbl cofactor delivery from MMAB to the methylmalonyl-CoA mutase (MMUT). Plays a dual role as both a protectase and a reactivase for MMUT. Protects MMUT from progressive inactivation by oxidation by decreasing the rate of the formation of the oxidized inactive cofactor hydroxocobalamin (OH2Cbl). Additionally acts a reactivase by promoting the replacement of OH2Cbl by the active cofactor AdoCbl, restoring the activity of MMUT in the presence and hydrolysis of GTP. The protein is Methylmalonic aciduria type A protein, mitochondrial of Homo sapiens (Human).